The sequence spans 953 residues: Scaffold attachment factor B2 (953 aa).

Residues M1–R29 are disordered. A2 carries the N-acetylalanine modification. Residues L30 to V64 enclose the SAP domain. Residue S54 is modified to Phosphoserine. Residue K65 forms a Glycyl lysine isopeptide (Lys-Gly) (interchain with G-Cter in SUMO1); alternate linkage. K65 is covalently cross-linked (Glycyl lysine isopeptide (Lys-Gly) (interchain with G-Cter in SUMO2); alternate). Residues K91 to E114 form a disordered region. K94 is covalently cross-linked (Glycyl lysine isopeptide (Lys-Gly) (interchain with G-Cter in SUMO2)). Positions E98–E114 are enriched in acidic residues. Phosphoserine is present on residues S109 and S158. Residues K188 and K199 each participate in a glycyl lysine isopeptide (Lys-Gly) (interchain with G-Cter in SUMO2) cross-link. At T201 the chain carries Phosphothreonine. A Phosphoserine modification is found at S207. The tract at residues I219–G404 is disordered. Over residues C224–S233 the composition is skewed to basic and acidic residues. K230 participates in a covalent cross-link: Glycyl lysine isopeptide (Lys-Gly) (interchain with G-Cter in SUMO). Positions S274–A285 are enriched in polar residues. Over residues V292–C308 the composition is skewed to basic and acidic residues. K293 participates in a covalent cross-link: Glycyl lysine isopeptide (Lys-Gly) (interchain with G-Cter in SUMO). The span at E318–A329 shows a compositional bias: low complexity. The span at E345–F358 shows a compositional bias: basic and acidic residues. A compositionally biased stretch (polar residues) spans E370–S382. Residues K380, K385, K388, K391, and K395 each participate in a glycyl lysine isopeptide (Lys-Gly) (interchain with G-Cter in SUMO2) cross-link. Basic and acidic residues predominate over residues S383–R400. The 79-residue stretch at R407–N485 folds into the RRM domain. Residues S507 and S513 each carry the phosphoserine modification. Residues K517, K524, K525, K541, K542, and K551 each participate in a glycyl lysine isopeptide (Lys-Gly) (interchain with G-Cter in SUMO2) cross-link. Residues K525–K551 are compositionally biased toward basic and acidic residues. Disordered regions lie at residues K525–R665 and R684–Y953. Polar residues predominate over residues T555 to G564. Positions G567–G579 are enriched in basic and acidic residues. Residues K578, K586, and K608 each participate in a glycyl lysine isopeptide (Lys-Gly) (interchain with G-Cter in SUMO2) cross-link. Composition is skewed to basic and acidic residues over residues R590–R665 and R684–D820. Positions D600 to Y953 are interaction with SAFB1. K616 is covalently cross-linked (Glycyl lysine isopeptide (Lys-Gly) (interchain with G-Cter in SUMO2); alternate). K616 carries the post-translational modification N6-acetyllysine; alternate. The short motif at R713–R730 is the Nuclear localization signal element. A phosphoserine mark is found at S787 and S832. Basic and acidic residues predominate over residues G843–A859. Gly residues predominate over residues G881–G890. At S886 the chain carries Phosphoserine. R897 and R903 each carry omega-N-methylarginine. The segment covering G899–V927 has biased composition (gly residues).

As to quaternary structure, interacts with SAFB/SAFB1 and SCAM1. Interacts with isoform 2 SRPK1 and inhibits its activity. In terms of tissue distribution, expressed at high levels in the CNS and at low levels in the liver. Expressed in a wide number of breast cancer cell lines.

It is found in the cytoplasm. It localises to the nucleus. In terms of biological role, binds to scaffold/matrix attachment region (S/MAR) DNA. Can function as an estrogen receptor corepressor and can also inhibit cell proliferation. The protein is Scaffold attachment factor B2 (SAFB2) of Homo sapiens (Human).